Consider the following 1073-residue polypeptide: Collagen alpha-2(I) chain (1073 aa).

The interval 1-939 is disordered; the sequence is APDPGPGPMG…PGPAGGGYDV (939 aa). Low complexity-rich tracts occupy residues 100–148, 178–187, and 194–215; these read EPGA…AAGP, EPGPNGAVGP, and PGNN…AGAP. A compositionally biased stretch (pro residues) spans 217–227; the sequence is FPGPRGGPGPQ. Residues 229-239 show a composition bias toward low complexity; the sequence is PQGAAGQRGLA. Over residues 246 to 255 the composition is skewed to gly residues; that stretch reads GVKGDGGPKG. Low complexity-rich tracts occupy residues 296-315, 321-348, 386-399, and 411-423; these read MPGA…PGDA, SGPA…AGPA, APGP…TGAT, and QGAA…QGLP. Positions 424-433 are enriched in gly residues; it reads GPAGGAGEAG. A compositionally biased stretch (low complexity) spans 458 to 468; sequence NPGAAGASGPQ. Over residues 481 to 508 the composition is skewed to gly residues; the sequence is GTDGGKGEPGAAGAAGGPGHQGPGGMPG. The span at 519–530 shows a compositional bias: basic and acidic residues; it reads KGEKGEAGHRGP. Composition is skewed to low complexity over residues 561–575 and 584–597; these read SGSF…ARGA and PAGA…PGAD. The segment covering 607–616 has biased composition (gly residues); the sequence is GPSGGKGESG. 3 stretches are compositionally biased toward low complexity: residues 617 to 642, 653 to 680, and 708 to 729; these read PAGP…TGAR, FPGA…PAGK, and SGEK…SGPL. The segment covering 745–757 has biased composition (gly residues); the sequence is GSPGGAGGVGEPG. Residues 758–774 are compositionally biased toward low complexity; it reads RVGPAGPAGARGNLGLP. Gly residues predominate over residues 811-820; sequence GESGPGGAAG. Low complexity predominate over residues 821–836; sequence AVGPAGARGAAGPSGP. Residues 837–851 show a composition bias toward basic and acidic residues; the sequence is RGEKGVAGEKGERGL. Composition is skewed to low complexity over residues 857–876 and 906–917; these read LQGM…AGPN and PGARGPPGYVGP. Pro residues predominate over residues 918–932; it reads AGPPGSPGLPGPPGP. A Fibrillar collagen NC1 domain is found at 1039–1073; it reads RTNKPSRLPLLDLAPLDLGGADQEFGLDLGPVCFK.

This sequence belongs to the fibrillar collagen family.

Its subcellular location is the secreted. The protein localises to the extracellular space. It localises to the extracellular matrix. The protein is Collagen alpha-2(I) chain of Epinephelus aeneus (White grouper).